Reading from the N-terminus, the 126-residue chain is Fluoride-specific ion channel FluC (126 aa).

2 consecutive transmembrane segments (helical) span residues 2–22 and 36–56; these read IKSL…RWLL and GTLV…AYFL. Residues glycine 75 and serine 78 each contribute to the Na(+) site. The next 2 membrane-spanning stretches (helical) occupy residues 80–100 and 105–125; these read FSTF…IWAL and VHVI…TILF.

Belongs to the fluoride channel Fluc/FEX (TC 1.A.43) family. In terms of assembly, homodimer.

The protein resides in the cell inner membrane. It carries out the reaction fluoride(in) = fluoride(out). With respect to regulation, na(+) is not transported, but it plays an essential structural role and its presence is essential for fluoride channel function. In terms of biological role, fluoride-specific ion channel. Important for reducing fluoride concentration in the cell, thus reducing its toxicity. Is highly specific for fluoride ions and cannot transport chloride ions. This chain is Fluoride-specific ion channel FluC, found in Escherichia coli O1:K1 / APEC.